Reading from the N-terminus, the 318-residue chain is NADH-ubiquinone oxidoreductase chain 1 (318 aa).

A run of 8 helical transmembrane segments spans residues 2–22, 69–89, 102–122, 146–166, 171–191, 222–242, 253–273, and 294–314; these read FLINVLTVTLPILLAVAFLTL, FLFTIAPILALTLALTVWAPL, LLFILAMSSLMVYSILWSGWA, MTTIILSMVLMNGSFTLTAFA, HLWLIFPMWPLMMMWFTSTLA, LFFMAEYANIIMMNALTVILF, EISTINFVVKTMILTICFLWV, and LPLTLALCMWHISILISLACI.

The protein belongs to the complex I subunit 1 family.

Its subcellular location is the mitochondrion inner membrane. It catalyses the reaction a ubiquinone + NADH + 5 H(+)(in) = a ubiquinol + NAD(+) + 4 H(+)(out). Its function is as follows. Core subunit of the mitochondrial membrane respiratory chain NADH dehydrogenase (Complex I) that is believed to belong to the minimal assembly required for catalysis. Complex I functions in the transfer of electrons from NADH to the respiratory chain. The immediate electron acceptor for the enzyme is believed to be ubiquinone. The sequence is that of NADH-ubiquinone oxidoreductase chain 1 (MT-ND1) from Mammuthus primigenius (Siberian woolly mammoth).